Reading from the N-terminus, the 221-residue chain is Probable hydrogenase maturation factor HypB (221 aa).

The tract at residues Ala35–Val196 is G-domain. 2 residues coordinate Ni(2+): Cys95 and His96. Residues Cys95, His96, His100, His104, and Cys127 each contribute to the Zn(2+) site. Cys127 contacts Ni(2+).

The protein belongs to the SIMIBI class G3E GTPase family. HypB/HupM subfamily. In terms of assembly, homodimer.

In terms of biological role, involved in the maturation of [NiFe] hydrogenases. Required for nickel insertion into the metal center of the hydrogenase. Exhibits a low intrinsic GTPase activity, which is essential for nickel insertion. In Methanocaldococcus jannaschii (strain ATCC 43067 / DSM 2661 / JAL-1 / JCM 10045 / NBRC 100440) (Methanococcus jannaschii), this protein is Probable hydrogenase maturation factor HypB.